The primary structure comprises 432 residues: Heme-based aerotactic transducer HemAT (432 aa).

The region spanning 184–420 (YNQTRDEQEE…EVSRAVSHVA (237 aa)) is the Methyl-accepting transducer domain.

This sequence belongs to the methyl-accepting chemotaxis (MCP) protein family. In terms of assembly, homotetramer.

In terms of biological role, heme-containing signal transducer responsible for aerotaxis, the migratory response toward or away from oxygen. The protein is Heme-based aerotactic transducer HemAT (hemAT) of Bacillus subtilis (strain 168).